Consider the following 419-residue polypeptide: L-rhamnose isomerase (419 aa).

Mn(2+) contacts are provided by H262, D294, and D296.

Belongs to the rhamnose isomerase family. As to quaternary structure, homotetramer. The cofactor is Mn(2+).

Its subcellular location is the cytoplasm. The catalysed reaction is L-rhamnopyranose = L-rhamnulose. It functions in the pathway carbohydrate degradation; L-rhamnose degradation; glycerone phosphate from L-rhamnose: step 1/3. Functionally, catalyzes the interconversion of L-rhamnose and L-rhamnulose. The chain is L-rhamnose isomerase from Escherichia coli O9:H4 (strain HS).